The sequence spans 528 residues: PH domain-containing protein DDB_G0267786 (528 aa).

The PH domain maps to 59-180 (SDVFSGYLVK…WIEIFKTCCR (122 aa)).

This chain is PH domain-containing protein DDB_G0267786, found in Dictyostelium discoideum (Social amoeba).